We begin with the raw amino-acid sequence, 202 residues long: Large ribosomal subunit protein uL4 (202 aa).

Over residues 42–52 (GTKAQKSRSQV) the composition is skewed to polar residues. The segment at 42 to 70 (GTKAQKSRSQVSGTTKKSKKQKGGGARHG) is disordered.

This sequence belongs to the universal ribosomal protein uL4 family. Part of the 50S ribosomal subunit.

In terms of biological role, one of the primary rRNA binding proteins, this protein initially binds near the 5'-end of the 23S rRNA. It is important during the early stages of 50S assembly. It makes multiple contacts with different domains of the 23S rRNA in the assembled 50S subunit and ribosome. Functionally, forms part of the polypeptide exit tunnel. The sequence is that of Large ribosomal subunit protein uL4 from Xylella fastidiosa (strain Temecula1 / ATCC 700964).